The primary structure comprises 367 residues: Otolith matrix protein 1 (367 aa).

The signal sequence occupies residues 1 to 23 (MDRLDRRLAATLLLFSFISFSTQ). One can recognise a Transferrin-like domain in the interval 27 to 363 (ISWCVVSEAE…YTTVLQAFEC (337 aa)).

The protein belongs to the transferrin family. Interacts with OTOL1. In terms of tissue distribution, expressed in the sacculus during the day.

The protein resides in the secreted. Required for normal otolith growth and deposition of otolin-1 in the otolith. This chain is Otolith matrix protein 1 (otomp), found in Oncorhynchus mykiss (Rainbow trout).